The primary structure comprises 305 residues: Probable xyloglucan endotransglucosylase/hydrolase protein 21 (305 aa).

A signal peptide spans 1–25 (MVSSTLLVMSISLFLGLSILLVVHG). In terms of domain architecture, GH16 spans 26–216 (KDFNQDIDIT…WSQGPFVASF (191 aa)). A glycan (N-linked (GlcNAc...) asparagine) is linked at asparagine 46. The active-site Nucleophile is glutamate 102. The active-site Proton donor is glutamate 106. Position 106 (glutamate 106) interacts with xyloglucan. Residue asparagine 110 is glycosylated (N-linked (GlcNAc...) asparagine). Residues 119-121 (HTN) and 129-131 (DRE) each bind xyloglucan. N-linked (GlcNAc...) asparagine glycosylation is present at asparagine 146. Residues 195–196 (DW) and glycine 200 each bind xyloglucan. N-linked (GlcNAc...) asparagine glycans are attached at residues asparagine 206 and asparagine 231. 2 disulfides stabilise this stretch: cysteine 225/cysteine 239 and cysteine 282/cysteine 296. Over residues 236–253 (TSPCSPGDSTSSSSSSTS) the composition is skewed to low complexity. The tract at residues 236-258 (TSPCSPGDSTSSSSSSTSEWFSQ) is disordered. Arginine 287 provides a ligand contact to xyloglucan.

The protein belongs to the glycosyl hydrolase 16 family. XTH group 2 subfamily. Contains at least one intrachain disulfide bond essential for its enzymatic activity. Predominantly expressed in green siliques.

It is found in the secreted. The protein localises to the cell wall. It localises to the extracellular space. The protein resides in the apoplast. The catalysed reaction is breaks a beta-(1-&gt;4) bond in the backbone of a xyloglucan and transfers the xyloglucanyl segment on to O-4 of the non-reducing terminal glucose residue of an acceptor, which can be a xyloglucan or an oligosaccharide of xyloglucan.. Functionally, catalyzes xyloglucan endohydrolysis (XEH) and/or endotransglycosylation (XET). Cleaves and religates xyloglucan polymers, an essential constituent of the primary cell wall, and thereby participates in cell wall construction of growing tissues. The chain is Probable xyloglucan endotransglucosylase/hydrolase protein 21 (XTH21) from Arabidopsis thaliana (Mouse-ear cress).